Consider the following 301-residue polypeptide: Putative S-adenosyl-L-methionine-dependent methyltransferase MUL_0450 (301 aa).

S-adenosyl-L-methionine-binding positions include Asp-127 and 156–157 (DL).

Belongs to the UPF0677 family.

Exhibits S-adenosyl-L-methionine-dependent methyltransferase activity. The protein is Putative S-adenosyl-L-methionine-dependent methyltransferase MUL_0450 of Mycobacterium ulcerans (strain Agy99).